Consider the following 1088-residue polypeptide: Tyrocidine synthase 1 (1088 aa).

Residues Pro528–Thr602 form the Carrier domain. At Ser563 the chain carries O-(pantetheine 4'-phosphoryl)serine.

This sequence belongs to the ATP-dependent AMP-binding enzyme family. Large multienzyme complex of TycA, TycB and TycC. Pantetheine 4'-phosphate is required as a cofactor.

The enzyme catalyses L-phenylalanine + ATP + H2O = D-phenylalanine + AMP + diphosphate + H(+). Its pathway is antibiotic biosynthesis; tyrocidine biosynthesis. Functionally, in the first step of peptide synthesis this enzyme activates phenylalanine and racemizes it to the D-isomer. This chain is Tyrocidine synthase 1 (tycA), found in Brevibacillus parabrevis.